The primary structure comprises 365 residues: MKMVFRWYGEGNDSVTLEQIRQIPGVEGIVWALHHQPPGEEWPLEEILEVKRQCEQHGFHIEVVESVNIHEDIKLGLPTRDLYIEKYKRTIENLAKAGVKVICYNFMPVFDWLRTDLYKKAPDGSTALFYEHAKVHTIDPFALVDQIAKHPEFTMPGWEPERLEHLTRLFEAYQNVTEEDLWSHLHYFLERIIPTAARCGIKMAIHPDDPPWPVFGLPRIMTSGESIGRLLQLVDHPANGVTLCSGSLGANPENDISAMIHAYADRIPFAHIRNVKVYENGDFIETSHRTKDGTVDICGIVKAYHETGFSGYVRPDHGRHIWDEKCRPGYGLYDRALGIMYLWGIWDSLNREKQEASKCLKSMKI.

It belongs to the mannonate dehydratase family. It depends on Fe(2+) as a cofactor. Mn(2+) is required as a cofactor.

The enzyme catalyses D-mannonate = 2-dehydro-3-deoxy-D-gluconate + H2O. Its pathway is carbohydrate metabolism; pentose and glucuronate interconversion. Its function is as follows. Catalyzes the dehydration of D-mannonate. The polypeptide is Mannonate dehydratase 1 (Bacillus licheniformis (strain ATCC 14580 / DSM 13 / JCM 2505 / CCUG 7422 / NBRC 12200 / NCIMB 9375 / NCTC 10341 / NRRL NRS-1264 / Gibson 46)).